The following is a 547-amino-acid chain: CTP synthase (547 aa).

An amidoligase domain region spans residues 1–265 (MARYVFITGG…DQAVLDAFGI (265 aa)). Ser13 contacts CTP. Ser13 provides a ligand contact to UTP. ATP contacts are provided by residues 14–19 (SLGKGL) and Asp71. Mg(2+)-binding residues include Asp71 and Glu139. CTP is bound by residues 146 to 148 (DIE), 186 to 191 (KTKPTQ), and Lys222. Residues 186-191 (KTKPTQ) and Lys222 contribute to the UTP site. The region spanning 291 to 546 (RVAIVGKYTQ…VRAAVEVSRL (256 aa)) is the Glutamine amidotransferase type-1 domain. Gly353 contacts L-glutamine. The active-site Nucleophile; for glutamine hydrolysis is Cys380. L-glutamine-binding positions include 381-384 (LGMQ), Glu404, and Arg474. Catalysis depends on residues His519 and Glu521.

This sequence belongs to the CTP synthase family. Homotetramer.

The enzyme catalyses UTP + L-glutamine + ATP + H2O = CTP + L-glutamate + ADP + phosphate + 2 H(+). It carries out the reaction L-glutamine + H2O = L-glutamate + NH4(+). It catalyses the reaction UTP + NH4(+) + ATP = CTP + ADP + phosphate + 2 H(+). It participates in pyrimidine metabolism; CTP biosynthesis via de novo pathway; CTP from UDP: step 2/2. Its activity is regulated as follows. Allosterically activated by GTP, when glutamine is the substrate; GTP has no effect on the reaction when ammonia is the substrate. The allosteric effector GTP functions by stabilizing the protein conformation that binds the tetrahedral intermediate(s) formed during glutamine hydrolysis. Inhibited by the product CTP, via allosteric rather than competitive inhibition. Its function is as follows. Catalyzes the ATP-dependent amination of UTP to CTP with either L-glutamine or ammonia as the source of nitrogen. Regulates intracellular CTP levels through interactions with the four ribonucleotide triphosphates. The sequence is that of CTP synthase from Cereibacter sphaeroides (strain ATCC 17023 / DSM 158 / JCM 6121 / CCUG 31486 / LMG 2827 / NBRC 12203 / NCIMB 8253 / ATH 2.4.1.) (Rhodobacter sphaeroides).